The following is a 460-amino-acid chain: Phosphoglucomutase (460 aa).

S103 serves as the catalytic Phosphoserine intermediate. S103 provides a ligand contact to Mg(2+). Substrate is bound by residues 103-104 (SH) and K113. Residues D239, D241, and D243 each contribute to the Mg(2+) site. Residues 243 to 244 (DR), T303, and 322 to 324 (EMS) contribute to the substrate site.

This sequence belongs to the phosphohexose mutase family. Mg(2+) serves as cofactor.

Its subcellular location is the cytoplasm. The enzyme catalyses alpha-D-glucose 1-phosphate = alpha-D-glucose 6-phosphate. This enzyme participates in both the breakdown and synthesis of glucose. The chain is Phosphoglucomutase (pgm) from Neisseria gonorrhoeae.